Here is a 255-residue protein sequence, read N- to C-terminus: Hydroxyacylglutathione hydrolase (255 aa).

Residues His56, His58, Asp60, His61, His114, Asp133, and His171 each coordinate Zn(2+).

The protein belongs to the metallo-beta-lactamase superfamily. Glyoxalase II family. Monomer. Zn(2+) serves as cofactor.

The enzyme catalyses an S-(2-hydroxyacyl)glutathione + H2O = a 2-hydroxy carboxylate + glutathione + H(+). Its pathway is secondary metabolite metabolism; methylglyoxal degradation; (R)-lactate from methylglyoxal: step 2/2. Its function is as follows. Thiolesterase that catalyzes the hydrolysis of S-D-lactoyl-glutathione to form glutathione and D-lactic acid. This is Hydroxyacylglutathione hydrolase from Rhodopseudomonas palustris (strain HaA2).